The primary structure comprises 380 residues: N-acetylaspartylglutamate synthase A (380 aa).

The ATP-grasp domain maps to Phe-115–Met-300. ATP is bound by residues Lys-154, Gln-189 to Asp-199, and Arg-215. Residues Asp-260, Glu-273, and Asn-275 each contribute to the Mg(2+) site. Mn(2+) contacts are provided by Asp-260, Glu-273, and Asn-275. Ser-319 is subject to Phosphoserine. A disordered region spans residues Gly-345–Pro-370.

The protein belongs to the RimK family. The cofactor is Mg(2+). It depends on Mn(2+) as a cofactor. In terms of tissue distribution, highly expressed in spinal cord and brain.

The protein localises to the cytoplasm. It carries out the reaction N-acetyl-L-aspartate + L-glutamate + ATP = N-acetyl-L-aspartyl-L-glutamate + ADP + phosphate + H(+). The catalysed reaction is N-acetyl-L-aspartate + 2 L-glutamate + 2 ATP = N-acetyl-L-aspartyl-L-glutamyl-L-glutamate + 2 ADP + 2 phosphate + 2 H(+). Catalyzes the synthesis of N-acetyl-L-aspartyl-L-glutamate (NAAG) and N-acetyl-L-aspartyl-L-glutamyl-L-glutamate. In Mus musculus (Mouse), this protein is N-acetylaspartylglutamate synthase A (Rimkla).